Here is a 622-residue protein sequence, read N- to C-terminus: 1-deoxy-D-xylulose-5-phosphate synthase (622 aa).

Residues histidine 80 and 121-123 (GHS) contribute to the thiamine diphosphate site. A Mg(2+)-binding site is contributed by aspartate 152. Thiamine diphosphate-binding positions include 153 to 154 (GA), asparagine 181, tyrosine 288, and glutamate 370. Asparagine 181 contacts Mg(2+).

Belongs to the transketolase family. DXPS subfamily. As to quaternary structure, homodimer. Requires Mg(2+) as cofactor. Thiamine diphosphate is required as a cofactor.

The catalysed reaction is D-glyceraldehyde 3-phosphate + pyruvate + H(+) = 1-deoxy-D-xylulose 5-phosphate + CO2. It functions in the pathway metabolic intermediate biosynthesis; 1-deoxy-D-xylulose 5-phosphate biosynthesis; 1-deoxy-D-xylulose 5-phosphate from D-glyceraldehyde 3-phosphate and pyruvate: step 1/1. Catalyzes the acyloin condensation reaction between C atoms 2 and 3 of pyruvate and glyceraldehyde 3-phosphate to yield 1-deoxy-D-xylulose-5-phosphate (DXP). In Shewanella denitrificans (strain OS217 / ATCC BAA-1090 / DSM 15013), this protein is 1-deoxy-D-xylulose-5-phosphate synthase.